A 522-amino-acid chain; its full sequence is Peptide chain release factor 3 (522 aa).

The region spanning 10–277 (ASRKTFAIIS…TFVDFAPAPS (268 aa)) is the tr-type G domain. Residues 19 to 26 (SHPDAGKT), 87 to 91 (DTPGH), and 141 to 144 (NKMD) each bind GTP.

This sequence belongs to the TRAFAC class translation factor GTPase superfamily. Classic translation factor GTPase family. PrfC subfamily.

It is found in the cytoplasm. Increases the formation of ribosomal termination complexes and stimulates activities of RF-1 and RF-2. It binds guanine nucleotides and has strong preference for UGA stop codons. It may interact directly with the ribosome. The stimulation of RF-1 and RF-2 is significantly reduced by GTP and GDP, but not by GMP. The sequence is that of Peptide chain release factor 3 from Listeria welshimeri serovar 6b (strain ATCC 35897 / DSM 20650 / CCUG 15529 / CIP 8149 / NCTC 11857 / SLCC 5334 / V8).